Consider the following 435-residue polypeptide: Homogentisate 1,2-dioxygenase (435 aa).

The active-site Proton acceptor is the H289. The Fe cation site is built by H332 and E338. Homogentisate is bound by residues Y347 and H368. H368 contacts Fe cation.

Belongs to the homogentisate dioxygenase family. Hexamer; dimer of trimers. The cofactor is Fe cation.

It carries out the reaction homogentisate + O2 = 4-maleylacetoacetate + H(+). It functions in the pathway amino-acid degradation; L-phenylalanine degradation; acetoacetate and fumarate from L-phenylalanine: step 4/6. Functionally, involved in the catabolism of homogentisate (2,5-dihydroxyphenylacetate or 2,5-OH-PhAc), a central intermediate in the degradation of phenylalanine and tyrosine. Catalyzes the oxidative ring cleavage of the aromatic ring of homogentisate to yield maleylacetoacetate. The chain is Homogentisate 1,2-dioxygenase from Pseudomonas savastanoi pv. phaseolicola (strain 1448A / Race 6) (Pseudomonas syringae pv. phaseolicola (strain 1448A / Race 6)).